The sequence spans 55 residues: ATP synthase F(0) complex subunit 8 (55 aa).

Residues 7–29 traverse the membrane as a helical segment; sequence NPWFYIMLMSWLTFSLIIQPELL.

This sequence belongs to the ATPase protein 8 family. Component of the ATP synthase complex composed at least of ATP5F1A/subunit alpha, ATP5F1B/subunit beta, ATP5MC1/subunit c (homooctomer), MT-ATP6/subunit a, MT-ATP8/subunit 8, ATP5ME/subunit e, ATP5MF/subunit f, ATP5MG/subunit g, ATP5MK/subunit k, ATP5MJ/subunit j, ATP5F1C/subunit gamma, ATP5F1D/subunit delta, ATP5F1E/subunit epsilon, ATP5PF/subunit F6, ATP5PB/subunit b, ATP5PD/subunit d, ATP5PO/subunit OSCP. ATP synthase complex consists of a soluble F(1) head domain (subunits alpha(3) and beta(3)) - the catalytic core - and a membrane F(0) domain - the membrane proton channel (subunits c, a, 8, e, f, g, k and j). These two domains are linked by a central stalk (subunits gamma, delta, and epsilon) rotating inside the F1 region and a stationary peripheral stalk (subunits F6, b, d, and OSCP).

Its subcellular location is the mitochondrion membrane. In terms of biological role, subunit 8, of the mitochondrial membrane ATP synthase complex (F(1)F(0) ATP synthase or Complex V) that produces ATP from ADP in the presence of a proton gradient across the membrane which is generated by electron transport complexes of the respiratory chain. ATP synthase complex consist of a soluble F(1) head domain - the catalytic core - and a membrane F(1) domain - the membrane proton channel. These two domains are linked by a central stalk rotating inside the F(1) region and a stationary peripheral stalk. During catalysis, ATP synthesis in the catalytic domain of F(1) is coupled via a rotary mechanism of the central stalk subunits to proton translocation. In vivo, can only synthesize ATP although its ATP hydrolase activity can be activated artificially in vitro. Part of the complex F(0) domain. The sequence is that of ATP synthase F(0) complex subunit 8 from Musophaga violacea (Violet turaco).